Consider the following 592-residue polypeptide: V-type ATP synthase alpha chain (592 aa).

Position 232–239 (232–239 (GPFGSGKT)) interacts with ATP.

The protein belongs to the ATPase alpha/beta chains family.

The catalysed reaction is ATP + H2O + 4 H(+)(in) = ADP + phosphate + 5 H(+)(out). Functionally, produces ATP from ADP in the presence of a proton gradient across the membrane. The V-type alpha chain is a catalytic subunit. In Clostridioides difficile (strain 630) (Peptoclostridium difficile), this protein is V-type ATP synthase alpha chain.